The primary structure comprises 417 residues: Tyrosine--tRNA ligase (417 aa).

An L-tyrosine-binding site is contributed by Tyr39. Residues 44 to 53 carry the 'HIGH' region motif; sequence PTAASLHAGG. L-tyrosine-binding residues include Tyr176 and Gln180. A 'KMSKS' region motif is present at residues 236–240; sequence KMGKS. Lys239 provides a ligand contact to ATP. The S4 RNA-binding domain maps to 350–417; the sequence is LGLLTLLVRA…KKKHLLVRPV (68 aa).

This sequence belongs to the class-I aminoacyl-tRNA synthetase family. TyrS type 1 subfamily. In terms of assembly, homodimer.

The protein resides in the cytoplasm. The enzyme catalyses tRNA(Tyr) + L-tyrosine + ATP = L-tyrosyl-tRNA(Tyr) + AMP + diphosphate + H(+). Functionally, catalyzes the attachment of tyrosine to tRNA(Tyr) in a two-step reaction: tyrosine is first activated by ATP to form Tyr-AMP and then transferred to the acceptor end of tRNA(Tyr). The polypeptide is Tyrosine--tRNA ligase (Rhizobium meliloti (strain 1021) (Ensifer meliloti)).